A 671-amino-acid polypeptide reads, in one-letter code: tRNA 5-methylaminomethyl-2-thiouridine biosynthesis bifunctional protein MnmC (671 aa).

The tract at residues 1–245 (MVNVMNTLSF…KREMLWGEKP (245 aa)) is tRNA (mnm(5)s(2)U34)-methyltransferase. The interval 272-671 (VGGGVASLFV…RKLLKGSKVE (400 aa)) is FAD-dependent cmnm(5)s(2)U34 oxidoreductase.

It in the N-terminal section; belongs to the methyltransferase superfamily. tRNA (mnm(5)s(2)U34)-methyltransferase family. This sequence in the C-terminal section; belongs to the DAO family. FAD serves as cofactor.

The protein resides in the cytoplasm. It catalyses the reaction 5-aminomethyl-2-thiouridine(34) in tRNA + S-adenosyl-L-methionine = 5-methylaminomethyl-2-thiouridine(34) in tRNA + S-adenosyl-L-homocysteine + H(+). Catalyzes the last two steps in the biosynthesis of 5-methylaminomethyl-2-thiouridine (mnm(5)s(2)U) at the wobble position (U34) in tRNA. Catalyzes the FAD-dependent demodification of cmnm(5)s(2)U34 to nm(5)s(2)U34, followed by the transfer of a methyl group from S-adenosyl-L-methionine to nm(5)s(2)U34, to form mnm(5)s(2)U34. The sequence is that of tRNA 5-methylaminomethyl-2-thiouridine biosynthesis bifunctional protein MnmC from Actinobacillus pleuropneumoniae serotype 3 (strain JL03).